A 238-amino-acid chain; its full sequence is Small ribosomal subunit protein eS4 (238 aa).

Residues 38-101 form the S4 RNA-binding domain; the sequence is LPLALIIRDV…GEVYRVVPDA (64 aa).

The protein belongs to the eukaryotic ribosomal protein eS4 family.

This is Small ribosomal subunit protein eS4 from Pyrobaculum aerophilum (strain ATCC 51768 / DSM 7523 / JCM 9630 / CIP 104966 / NBRC 100827 / IM2).